Consider the following 210-residue polypeptide: Large ribosomal subunit protein uL3 (210 aa).

A disordered region spans residues 125–151 (RHGQSRGPMSHGSRYHRRPGSMGPVAP).

Belongs to the universal ribosomal protein uL3 family. In terms of assembly, part of the 50S ribosomal subunit. Forms a cluster with proteins L14 and L19.

Its function is as follows. One of the primary rRNA binding proteins, it binds directly near the 3'-end of the 23S rRNA, where it nucleates assembly of the 50S subunit. In Bacillus cereus (strain ATCC 14579 / DSM 31 / CCUG 7414 / JCM 2152 / NBRC 15305 / NCIMB 9373 / NCTC 2599 / NRRL B-3711), this protein is Large ribosomal subunit protein uL3.